Reading from the N-terminus, the 563-residue chain is Autotransporter BimA (563 aa).

Residues 1–20 are disordered; that stretch reads MKYRRLSLAHARQDSGQAAS. The N-terminal stretch at 1 to 48 is a signal peptide; the sequence is MKYRRLSLAHARQDSGQAASNARSRRFARLLCSSIAPLALGFSADAFA. The tract at residues 61-472 is surface exposed passenger domain; sequence APNDAHGNLL…NLAISNSNAY (412 aa). The WH2 domain maps to 65–82; the sequence is AHGNLLDEIRRGVPLRHV. The central and acidic domains stretch occupies residues 96–130; the sequence is TLADAMRRVIDSRRTAFDSPPATPASPSPSWSDDE. Residues 109–350 are disordered; the sequence is RTAFDSPPAT…PARPGGGQFT (242 aa). Composition is skewed to low complexity over residues 138–150, 162–197, and 211–227; these read ATRPASRPESAAR, PASAESPSPRSPDASPSRTPSPTFSFPSPSRTSTPR, and SPAASPRVASPRSAHSR. Composition is skewed to polar residues over residues 228-238 and 269-281; these read GSTQPPSNLST and SRGSTQPPSNLST. Residues 473-509 form an outer membrane translocation of the passenger domain region; it reads TNQRIGDLQQSITETARDAYSGVAAATALTMIPDVDR. Transmembrane regions (beta stranded) follow at residues 510–519, 525–536, 543–549, and 553–563; these read DKMLSIGVGG, HRAVALGGTARI, RAGVAMS, and NTVGVGMSWQW. The translocator domain stretch occupies residues 510–563; it reads DKMLSIGVGGAVYKGHRAVALGGTARIGENLKVRAGVAMSAGGNTVGVGMSWQW.

This sequence belongs to the autotransporter-2 (AT-2) (TC 1.B.40) family. In terms of assembly, homotrimer. Interacts with host G-actin; the interaction is direct. Interacts (via central and acidic domains) with host ACTR2/ARP2 and ACTR3/ARP3.

It is found in the cell outer membrane. Its subcellular location is the cell surface. Functionally, during host cell infection, required for actin-based intracellular motility. Mediates actin tail formation at one pole of the bacteria surface by recruiting host Arp2/3 (ACTR3/ARP3-ACTR2/ARP2) which leads to actin polymerization which provides the propulsive force for intracellular movement and intercellular dissemination of the bacterium. This is Autotransporter BimA from Burkholderia thailandensis (strain ATCC 700388 / DSM 13276 / CCUG 48851 / CIP 106301 / E264).